The following is a 554-amino-acid chain: Glucose-6-phosphate isomerase (554 aa).

The Proton donor role is filled by Glu-359. Residues His-390 and Lys-518 contribute to the active site.

The protein belongs to the GPI family.

It localises to the cytoplasm. The enzyme catalyses alpha-D-glucose 6-phosphate = beta-D-fructose 6-phosphate. The protein operates within carbohydrate biosynthesis; gluconeogenesis. Its pathway is carbohydrate degradation; glycolysis; D-glyceraldehyde 3-phosphate and glycerone phosphate from D-glucose: step 2/4. Catalyzes the reversible isomerization of glucose-6-phosphate to fructose-6-phosphate. The chain is Glucose-6-phosphate isomerase from Pseudomonas fluorescens (strain SBW25).